The sequence spans 374 residues: L-serine/homoserine O-acetyltransferase (374 aa).

In terms of domain architecture, AB hydrolase-1 spans 46-357; it reads AVLVLTGLSP…TPAGHDAFLV (312 aa). Residue Ser-149 is the Nucleophile of the active site. Catalysis depends on residues Asp-319 and His-352.

Belongs to the AB hydrolase superfamily. MetX family. Homodimer.

The protein resides in the cytoplasm. The catalysed reaction is L-serine + acetyl-CoA = O-acetyl-L-serine + CoA. The enzyme catalyses L-homoserine + acetyl-CoA = O-acetyl-L-homoserine + CoA. The protein operates within antibiotic biosynthesis. In terms of biological role, involved in the biosynthesis of the antibiotic D-cycloserine (DCS), a cyclic structural analog of D-alanine, used as an antitubercular agent. Catalyzes the transfer of the acetyl group from acetyl-CoA to the hydroxyl group of L-serine to yield the activated serine, O-acetyl-L-serine. It prefers L-serine over L-homoserine. The chain is L-serine/homoserine O-acetyltransferase from Streptomyces lavendulae.